We begin with the raw amino-acid sequence, 236 residues long: Pyridoxal 5'-phosphate synthase subunit PdxT (236 aa).

Residue 61-63 (GES) coordinates L-glutamine. C93 functions as the Nucleophile in the catalytic mechanism. L-glutamine is bound by residues R127 and 163–164 (IR). Catalysis depends on charge relay system residues H215 and E217.

This sequence belongs to the glutaminase PdxT/SNO family. In the presence of PdxS, forms a dodecamer of heterodimers. Only shows activity in the heterodimer.

The catalysed reaction is aldehydo-D-ribose 5-phosphate + D-glyceraldehyde 3-phosphate + L-glutamine = pyridoxal 5'-phosphate + L-glutamate + phosphate + 3 H2O + H(+). The enzyme catalyses L-glutamine + H2O = L-glutamate + NH4(+). It participates in cofactor biosynthesis; pyridoxal 5'-phosphate biosynthesis. Catalyzes the hydrolysis of glutamine to glutamate and ammonia as part of the biosynthesis of pyridoxal 5'-phosphate. The resulting ammonia molecule is channeled to the active site of PdxS. This chain is Pyridoxal 5'-phosphate synthase subunit PdxT, found in Pseudarthrobacter chlorophenolicus (strain ATCC 700700 / DSM 12829 / CIP 107037 / JCM 12360 / KCTC 9906 / NCIMB 13794 / A6) (Arthrobacter chlorophenolicus).